A 510-amino-acid chain; its full sequence is 2,3-bisphosphoglycerate-independent phosphoglycerate mutase (510 aa).

Asp12 contributes to the Mn(2+) binding site. Tyr36 is subject to Phosphotyrosine. Ser62 is a Mn(2+) binding site. The Phosphoserine intermediate role is filled by Ser62. Substrate-binding positions include His123, 153–154, Arg185, Arg191, 261–264, and Lys336; these read RD and RPDR. Positions 403, 407, 444, 445, and 462 each coordinate Mn(2+).

It belongs to the BPG-independent phosphoglycerate mutase family. Monomer. Mn(2+) is required as a cofactor.

The enzyme catalyses (2R)-2-phosphoglycerate = (2R)-3-phosphoglycerate. The protein operates within carbohydrate degradation; glycolysis; pyruvate from D-glyceraldehyde 3-phosphate: step 3/5. Functionally, essential for rapid growth and for sporulation. Catalyzes the interconversion of 2-phosphoglycerate and 3-phosphoglycerate. The chain is 2,3-bisphosphoglycerate-independent phosphoglycerate mutase from Shouchella clausii (strain KSM-K16) (Alkalihalobacillus clausii).